We begin with the raw amino-acid sequence, 649 residues long: V-type ATP synthase subunit I (649 aa).

7 helical membrane-spanning segments follow: residues 312 to 332, 360 to 380, 455 to 475, 485 to 505, 520 to 540, 556 to 576, and 593 to 613; these read FLSF…GLIF, FMIL…FFGV, DNIL…LGML, IGWV…LQAV, GQVG…GGII, VFSD…GAMV, and VLII…GGVI.

The protein belongs to the V-ATPase 116 kDa subunit family.

Its subcellular location is the cell membrane. In terms of biological role, produces ATP from ADP in the presence of a proton gradient across the membrane. The polypeptide is V-type ATP synthase subunit I (atpI) (Chlamydia muridarum (strain MoPn / Nigg)).